Here is a 229-residue protein sequence, read N- to C-terminus: Uracil-DNA glycosylase (229 aa).

D64 serves as the catalytic Proton acceptor.

The protein belongs to the uracil-DNA glycosylase (UDG) superfamily. UNG family.

It is found in the cytoplasm. It carries out the reaction Hydrolyzes single-stranded DNA or mismatched double-stranded DNA and polynucleotides, releasing free uracil.. Functionally, excises uracil residues from the DNA which can arise as a result of misincorporation of dUMP residues by DNA polymerase or due to deamination of cytosine. This Salmonella agona (strain SL483) protein is Uracil-DNA glycosylase.